The chain runs to 228 residues: Protein GrpE (228 aa).

Disordered stretches follow at residues Met1–Ala31 and Gly209–Gly228.

It belongs to the GrpE family. As to quaternary structure, homodimer.

It localises to the cytoplasm. Functionally, participates actively in the response to hyperosmotic and heat shock by preventing the aggregation of stress-denatured proteins, in association with DnaK and GrpE. It is the nucleotide exchange factor for DnaK and may function as a thermosensor. Unfolded proteins bind initially to DnaJ; upon interaction with the DnaJ-bound protein, DnaK hydrolyzes its bound ATP, resulting in the formation of a stable complex. GrpE releases ADP from DnaK; ATP binding to DnaK triggers the release of the substrate protein, thus completing the reaction cycle. Several rounds of ATP-dependent interactions between DnaJ, DnaK and GrpE are required for fully efficient folding. This chain is Protein GrpE, found in Brucella anthropi (strain ATCC 49188 / DSM 6882 / CCUG 24695 / JCM 21032 / LMG 3331 / NBRC 15819 / NCTC 12168 / Alc 37) (Ochrobactrum anthropi).